Here is a 320-residue protein sequence, read N- to C-terminus: Phosphatidylserine decarboxylase proenzyme (320 aa).

Active-site charge relay system; for autoendoproteolytic cleavage activity residues include D90, H147, and S254. The Schiff-base intermediate with substrate; via pyruvic acid; for decarboxylase activity role is filled by S254. S254 carries the post-translational modification Pyruvic acid (Ser); by autocatalysis. The disordered stretch occupies residues T290–G320. Residues E301–G320 show a composition bias toward basic and acidic residues.

This sequence belongs to the phosphatidylserine decarboxylase family. PSD-B subfamily. Prokaryotic type I sub-subfamily. Heterodimer of a large membrane-associated beta subunit and a small pyruvoyl-containing alpha subunit. Requires pyruvate as cofactor. In terms of processing, is synthesized initially as an inactive proenzyme. Formation of the active enzyme involves a self-maturation process in which the active site pyruvoyl group is generated from an internal serine residue via an autocatalytic post-translational modification. Two non-identical subunits are generated from the proenzyme in this reaction, and the pyruvate is formed at the N-terminus of the alpha chain, which is derived from the carboxyl end of the proenzyme. The autoendoproteolytic cleavage occurs by a canonical serine protease mechanism, in which the side chain hydroxyl group of the serine supplies its oxygen atom to form the C-terminus of the beta chain, while the remainder of the serine residue undergoes an oxidative deamination to produce ammonia and the pyruvoyl prosthetic group on the alpha chain. During this reaction, the Ser that is part of the protease active site of the proenzyme becomes the pyruvoyl prosthetic group, which constitutes an essential element of the active site of the mature decarboxylase.

It localises to the cell membrane. The catalysed reaction is a 1,2-diacyl-sn-glycero-3-phospho-L-serine + H(+) = a 1,2-diacyl-sn-glycero-3-phosphoethanolamine + CO2. The protein operates within phospholipid metabolism; phosphatidylethanolamine biosynthesis; phosphatidylethanolamine from CDP-diacylglycerol: step 2/2. Functionally, catalyzes the formation of phosphatidylethanolamine (PtdEtn) from phosphatidylserine (PtdSer). In Klebsiella pneumoniae subsp. pneumoniae (strain ATCC 700721 / MGH 78578), this protein is Phosphatidylserine decarboxylase proenzyme.